Consider the following 709-residue polypeptide: DNA ligase (709 aa).

Residues 34–38 (DAEYD), 83–84 (SL), and Glu-115 each bind NAD(+). Lys-117 (N6-AMP-lysine intermediate) is an active-site residue. 4 residues coordinate NAD(+): Arg-138, Glu-185, Lys-301, and Lys-325. The Zn(2+) site is built by Cys-419, Cys-422, Cys-437, and Cys-443. The BRCT domain maps to 602-691 (RQSDTLAGKT…AEPPPSPPPP (90 aa)). The interval 679-709 (GTTAEPPPSPPPPPPETNTDGNQLLLPLDGE) is disordered. A compositionally biased stretch (pro residues) spans 683–694 (EPPPSPPPPPPE).

The protein belongs to the NAD-dependent DNA ligase family. LigA subfamily. Requires Mg(2+) as cofactor. The cofactor is Mn(2+).

The enzyme catalyses NAD(+) + (deoxyribonucleotide)n-3'-hydroxyl + 5'-phospho-(deoxyribonucleotide)m = (deoxyribonucleotide)n+m + AMP + beta-nicotinamide D-nucleotide.. DNA ligase that catalyzes the formation of phosphodiester linkages between 5'-phosphoryl and 3'-hydroxyl groups in double-stranded DNA using NAD as a coenzyme and as the energy source for the reaction. It is essential for DNA replication and repair of damaged DNA. This Chloroflexus aurantiacus (strain ATCC 29364 / DSM 637 / Y-400-fl) protein is DNA ligase.